The chain runs to 397 residues: Lysophospholipid transporter LplT (397 aa).

11 consecutive transmembrane segments (helical) span residues 16–36 (MMAV…LLFA), 53–73 (VLQM…GQVA), 91–111 (LGAV…LVGV), 139–159 (LMES…GMLA), 164–184 (GAAL…NLLI), 229–249 (WGAG…ALGI), 257–277 (YLNA…AKLV), 282–302 (VSRC…FSLQ), 304–324 (AALP…FFVV), 344–364 (IAVQ…LYSL), and 372–392 (VVGI…GLWL).

Belongs to the major facilitator superfamily. LplT (TC 2.A.1.42) family.

The protein localises to the cell inner membrane. Functionally, catalyzes the facilitated diffusion of 2-acyl-glycero-3-phosphoethanolamine (2-acyl-GPE) into the cell. The protein is Lysophospholipid transporter LplT of Cronobacter sakazakii (strain ATCC BAA-894) (Enterobacter sakazakii).